Consider the following 389-residue polypeptide: Arginine biosynthesis bifunctional protein ArgJ (389 aa).

Thr150, Lys173, Thr184, Glu263, Asn384, and Thr389 together coordinate substrate. Thr184 acts as the Nucleophile in catalysis.

The protein belongs to the ArgJ family. In terms of assembly, heterotetramer of two alpha and two beta chains.

The protein localises to the cytoplasm. It carries out the reaction N(2)-acetyl-L-ornithine + L-glutamate = N-acetyl-L-glutamate + L-ornithine. The enzyme catalyses L-glutamate + acetyl-CoA = N-acetyl-L-glutamate + CoA + H(+). It functions in the pathway amino-acid biosynthesis; L-arginine biosynthesis; L-ornithine and N-acetyl-L-glutamate from L-glutamate and N(2)-acetyl-L-ornithine (cyclic): step 1/1. Its pathway is amino-acid biosynthesis; L-arginine biosynthesis; N(2)-acetyl-L-ornithine from L-glutamate: step 1/4. Its function is as follows. Catalyzes two activities which are involved in the cyclic version of arginine biosynthesis: the synthesis of N-acetylglutamate from glutamate and acetyl-CoA as the acetyl donor, and of ornithine by transacetylation between N(2)-acetylornithine and glutamate. The chain is Arginine biosynthesis bifunctional protein ArgJ from Deinococcus radiodurans (strain ATCC 13939 / DSM 20539 / JCM 16871 / CCUG 27074 / LMG 4051 / NBRC 15346 / NCIMB 9279 / VKM B-1422 / R1).